Consider the following 152-residue polypeptide: Superoxide dismutase [Cu-Zn] (152 aa).

His-45, His-47, and His-62 together coordinate Cu cation. A disulfide bridge connects residues Cys-56 and Cys-145. Zn(2+) contacts are provided by His-62, His-70, His-79, and Asp-82. A Cu cation-binding site is contributed by His-119.

Belongs to the Cu-Zn superoxide dismutase family. In terms of assembly, homodimer. Cu cation is required as a cofactor. It depends on Zn(2+) as a cofactor.

It is found in the cytoplasm. The catalysed reaction is 2 superoxide + 2 H(+) = H2O2 + O2. Its function is as follows. Destroys radicals which are normally produced within the cells and which are toxic to biological systems. This chain is Superoxide dismutase [Cu-Zn] (SODCC), found in Paulownia kawakamii (Dragon tree).